The sequence spans 300 residues: MKIAILSRDGTLYSCKRLREAAIQRGHLVEILDPLSCYMNINPAASSIHYKGRKLPHFDAVIPRIGTAITFYGTAALRQFEMLGSYPLNESVAIARARDKLRSMQLLARQGIDLPVTGIAHSPDDTSDLIDMVGGAPLVVKLVEGTQGIGVVLAETRQAAESVIDAFRGLNAHILVQEYIKEAQGCDIRCLVVGDEVVAAIERRAKEGDFRSNLHRGGVASVARITPQEREIAIKAARTMALDVAGVDILRANRGPLVMEVNASPGLEGIEKTTGIDIAGKMIRWIERHATTEYCLKTGG.

The 184-residue stretch at 104-287 (MQLLARQGID…IAGKMIRWIE (184 aa)) folds into the ATP-grasp domain. ATP is bound by residues Lys-141, 178–179 (EY), Asp-187, and 211–213 (RSN). Mg(2+)-binding residues include Asp-248, Glu-260, and Asn-262. The Mn(2+) site is built by Asp-248, Glu-260, and Asn-262.

This sequence belongs to the RimK family. Requires Mg(2+) as cofactor. Mn(2+) serves as cofactor.

In terms of biological role, an L-glutamate ligase that catalyzes the ATP-dependent post-translational addition of glutamate residues to the C-terminus of ribosomal protein bS6 (RpsF). Is also able to catalyze the synthesis of poly-alpha-glutamate in vitro, via ATP hydrolysis from unprotected glutamate as substrate. The number of glutamate residues added to either RpsF or to poly-alpha-glutamate changes with pH. The polypeptide is Ribosomal protein bS6--L-glutamate ligase (Escherichia coli O7:K1 (strain IAI39 / ExPEC)).